The primary structure comprises 243 residues: 3-deoxy-manno-octulosonate cytidylyltransferase (243 aa).

It belongs to the KdsB family.

It localises to the cytoplasm. The enzyme catalyses 3-deoxy-alpha-D-manno-oct-2-ulosonate + CTP = CMP-3-deoxy-beta-D-manno-octulosonate + diphosphate. It functions in the pathway nucleotide-sugar biosynthesis; CMP-3-deoxy-D-manno-octulosonate biosynthesis; CMP-3-deoxy-D-manno-octulosonate from 3-deoxy-D-manno-octulosonate and CTP: step 1/1. It participates in bacterial outer membrane biogenesis; lipopolysaccharide biosynthesis. Its function is as follows. Activates KDO (a required 8-carbon sugar) for incorporation into bacterial lipopolysaccharide in Gram-negative bacteria. The protein is 3-deoxy-manno-octulosonate cytidylyltransferase of Helicobacter pylori (strain J99 / ATCC 700824) (Campylobacter pylori J99).